Consider the following 349-residue polypeptide: Phosphoribosylformylglycinamidine cyclo-ligase (349 aa).

It belongs to the AIR synthase family.

It localises to the cytoplasm. The catalysed reaction is 2-formamido-N(1)-(5-O-phospho-beta-D-ribosyl)acetamidine + ATP = 5-amino-1-(5-phospho-beta-D-ribosyl)imidazole + ADP + phosphate + H(+). The protein operates within purine metabolism; IMP biosynthesis via de novo pathway; 5-amino-1-(5-phospho-D-ribosyl)imidazole from N(2)-formyl-N(1)-(5-phospho-D-ribosyl)glycinamide: step 2/2. The chain is Phosphoribosylformylglycinamidine cyclo-ligase from Lawsonia intracellularis (strain PHE/MN1-00).